The sequence spans 294 residues: UPF0761 membrane protein YPN_0254 (294 aa).

The next 7 membrane-spanning stretches (helical) occupy residues Leu-44–Phe-64, Ile-67–Ile-87, Gly-108–Trp-128, Leu-136–Ala-156, Val-185–Val-205, Ala-212–Met-232, and Val-246–Leu-266.

It belongs to the UPF0761 family.

The protein localises to the cell inner membrane. The sequence is that of UPF0761 membrane protein YPN_0254 from Yersinia pestis bv. Antiqua (strain Nepal516).